The sequence spans 170 residues: Urease accessory protein UreE (170 aa).

The disordered stretch occupies residues E134 to E170.

It belongs to the UreE family.

It localises to the cytoplasm. Functionally, involved in urease metallocenter assembly. Binds nickel. Probably functions as a nickel donor during metallocenter assembly. The sequence is that of Urease accessory protein UreE from Janthinobacterium sp. (strain Marseille) (Minibacterium massiliensis).